The primary structure comprises 277 residues: Putative glucose-6-phosphate/phosphate-translocator-like protein 1 (277 aa).

The next 5 helical transmembrane spans lie at V8–L28, L46–V66, M124–F143, V153–F173, and P230–S250.

This sequence belongs to the TPT transporter family. GPT (TC 2.A.7.9) subfamily.

Its subcellular location is the membrane. The sequence is that of Putative glucose-6-phosphate/phosphate-translocator-like protein 1 from Arabidopsis thaliana (Mouse-ear cress).